Reading from the N-terminus, the 445-residue chain is Endoplasmic reticulum membrane adapter protein XK (445 aa).

Residues Met-1–Lys-2 are Cytoplasmic-facing. Residues Phe-3–Tyr-23 form a helical membrane-spanning segment. At Leu-24–Gln-37 the chain is on the extracellular side. Residues Ala-38–Val-58 form a helical membrane-spanning segment. Topologically, residues His-59–Leu-68 are cytoplasmic. The chain crosses the membrane as a helical span at residues Val-69–Ile-89. Topologically, residues Tyr-90 to Ser-140 are extracellular. Ser-115 is modified (phosphoserine). A helical transmembrane segment spans residues Val-141 to Leu-161. Topologically, residues Glu-162–Phe-170 are cytoplasmic. The chain crosses the membrane as a helical span at residues Ile-171–Ile-191. Over Lys-192–Tyr-207 the chain is Extracellular. Residues Val-208 to Phe-228 traverse the membrane as a helical segment. Over Thr-229 to Ile-234 the chain is Cytoplasmic. A helical membrane pass occupies residues Trp-235–Phe-255. Residues Trp-256–Thr-276 are Extracellular-facing. Residues Ile-277–Val-297 form a helical membrane-spanning segment. Over Gln-298–Leu-316 the chain is Cytoplasmic. Residues Leu-317–Phe-337 form a helical membrane-spanning segment. Over Lys-338–Pro-348 the chain is Extracellular. Residues Leu-349 to Tyr-369 traverse the membrane as a helical segment. At Gln-370 to Thr-445 the chain is on the cytoplasmic side.

The protein belongs to the XK family. As to quaternary structure, heterodimer with Kell; disulfide-linked. Interacts with VPS13A.

Its subcellular location is the endoplasmic reticulum membrane. Recruits the lipid transfer protein VPS13A from lipid droplets to the endoplasmic reticulum (ER) membrane. This is Endoplasmic reticulum membrane adapter protein XK from Rattus norvegicus (Rat).